A 381-amino-acid polypeptide reads, in one-letter code: Succinyl-diaminopimelate desuccinylase (381 aa).

His-69 contacts Zn(2+). Residue Asp-71 is part of the active site. Asp-103 provides a ligand contact to Zn(2+). Glu-137 acts as the Proton acceptor in catalysis. Zn(2+)-binding residues include Glu-138, Glu-166, and His-355.

Belongs to the peptidase M20A family. DapE subfamily. In terms of assembly, homodimer. It depends on Zn(2+) as a cofactor. The cofactor is Co(2+).

It catalyses the reaction N-succinyl-(2S,6S)-2,6-diaminopimelate + H2O = (2S,6S)-2,6-diaminopimelate + succinate. Its pathway is amino-acid biosynthesis; L-lysine biosynthesis via DAP pathway; LL-2,6-diaminopimelate from (S)-tetrahydrodipicolinate (succinylase route): step 3/3. Its function is as follows. Catalyzes the hydrolysis of N-succinyl-L,L-diaminopimelic acid (SDAP), forming succinate and LL-2,6-diaminopimelate (DAP), an intermediate involved in the bacterial biosynthesis of lysine and meso-diaminopimelic acid, an essential component of bacterial cell walls. The sequence is that of Succinyl-diaminopimelate desuccinylase from Rickettsia akari (strain Hartford).